An 824-amino-acid polypeptide reads, in one-letter code: AMP deaminase 2 (824 aa).

Residues 1–43 (MASYPGPGKSKAKYPFKKRAGLQASAAAPEARSGLGASPLQSA) are disordered. Residues 10–20 (SKAKYPFKKRA) show a composition bias toward basic residues. Position 44 is an omega-N-methylarginine (Arg-44). Residues Ser-45, Ser-63, and Ser-79 each carry the phosphoserine modification. The residue at position 90 (Tyr-90) is a Phosphotyrosine. Phosphoserine is present on residues Ser-96 and Ser-113. Thr-133 is modified (phosphothreonine). Residues Ser-135 and Ser-137 each carry the phosphoserine modification. Zn(2+) is bound by residues His-364 and His-366. Residues His-366 and 435-440 (KFNAKY) contribute to the substrate site. Position 633 (His-633) interacts with Zn(2+). A substrate-binding site is contributed by Glu-636. Residue His-655 is the Proton acceptor of the active site. Residue Asp-710 participates in Zn(2+) binding. 711–714 (DPLQ) provides a ligand contact to substrate.

This sequence belongs to the metallo-dependent hydrolases superfamily. Adenosine and AMP deaminases family. As to quaternary structure, homotetramer. Zn(2+) serves as cofactor.

The catalysed reaction is AMP + H2O + H(+) = IMP + NH4(+). It participates in purine metabolism; IMP biosynthesis via salvage pathway; IMP from AMP: step 1/1. AMP deaminase plays a critical role in energy metabolism. Catalyzes the deamination of AMP to IMP and plays an important role in the purine nucleotide cycle. The chain is AMP deaminase 2 from Mus musculus (Mouse).